The sequence spans 598 residues: Beta-myrcene/(E)-beta-ocimene synthase 2, chloroplastic (598 aa).

Residues 1 to 30 (MATLCIGSAPIYQNACIHNFRLQRPRRFIS) constitute a chloroplast transit peptide. The (2E)-geranyl diphosphate site is built by R307, D344, D348, R486, and N489. Positions 344 and 348 each coordinate Mg(2+). The short motif at 344-348 (DDIYD) is the DDXXD motif element. 3 residues coordinate Mg(2+): N489, T493, and E497.

It belongs to the terpene synthase family. Tpsb subfamily. Mg(2+) is required as a cofactor. Requires Mn(2+) as cofactor. As to expression, expressed exclusively in mature flowers, but not in inmmature buds.

It localises to the plastid. The protein resides in the chloroplast. The catalysed reaction is (2E)-geranyl diphosphate = beta-myrcene + diphosphate. It functions in the pathway secondary metabolite biosynthesis; terpenoid biosynthesis. In terms of biological role, involved in monoterpene (C10) biosynthesis. The major products are alpha- and beta-pinene, sabinene, beta-myrcene, (E)-beta-ocimene and limonene. The protein is Beta-myrcene/(E)-beta-ocimene synthase 2, chloroplastic (TPS24) of Arabidopsis thaliana (Mouse-ear cress).